We begin with the raw amino-acid sequence, 630 residues long: Mannosyl-oligosaccharide 1,2-alpha-mannosidase IC (630 aa).

Over 1 to 22 the chain is Cytoplasmic; that stretch reads MLMRKVPGFVPASPWGLRLPQK. The chain crosses the membrane as a helical; Signal-anchor for type II membrane protein span at residues 23 to 43; the sequence is FLFLLFLSGLVTLCFGALFLL. Residues 44–630 lie on the Lumenal side of the membrane; that stretch reads PHSSRLKRLF…DSSGRAWGRH (587 aa). The disordered stretch occupies residues 74–140; the sequence is PAREQEPPPN…ASRPGDEGVP (67 aa). A compositionally biased stretch (pro residues) spans 80-89; it reads PPPNPAPAAP. The segment covering 102 to 113 has biased composition (basic residues); it reads PRRRKGGLRRTR. Position 164 is a phosphoserine (Ser164). Residue Asn250 is glycosylated (N-linked (GlcNAc...) asparagine). A disulfide bridge connects residues Cys453 and Cys485. Catalysis depends on Glu499, which acts as the Proton donor. Position 610 (Thr610) interacts with Ca(2+). Asn618 carries an N-linked (GlcNAc...) asparagine glycan.

This sequence belongs to the glycosyl hydrolase 47 family. Requires Ca(2+) as cofactor. In terms of tissue distribution, expressed in most tissues with the exception of lung, muscle and pancreas. Highly expressed in placenta.

The protein localises to the golgi apparatus membrane. It carries out the reaction N(4)-(alpha-D-Man-(1-&gt;2)-alpha-D-Man-(1-&gt;2)-alpha-D-Man-(1-&gt;3)-[alpha-D-Man-(1-&gt;2)-alpha-D-Man-(1-&gt;3)-[alpha-D-Man-(1-&gt;2)-alpha-D-Man-(1-&gt;6)]-alpha-D-Man-(1-&gt;6)]-beta-D-Man-(1-&gt;4)-beta-D-GlcNAc-(1-&gt;4)-beta-D-GlcNAc)-L-asparaginyl-[protein] (N-glucan mannose isomer 9A1,2,3B1,2,3) + 4 H2O = N(4)-(alpha-D-Man-(1-&gt;3)-[alpha-D-Man-(1-&gt;3)-[alpha-D-Man-(1-&gt;6)]-alpha-D-Man-(1-&gt;6)]-beta-D-Man-(1-&gt;4)-beta-D-GlcNAc-(1-&gt;4)-beta-D-GlcNAc)-L-asparaginyl-[protein] (N-glucan mannose isomer 5A1,2) + 4 beta-D-mannose. The enzyme catalyses N(4)-(alpha-D-Man-(1-&gt;2)-alpha-D-Man-(1-&gt;2)-alpha-D-Man-(1-&gt;3)-[alpha-D-Man-(1-&gt;3)-[alpha-D-Man-(1-&gt;2)-alpha-D-Man-(1-&gt;6)]-alpha-D-Man-(1-&gt;6)]-beta-D-Man-(1-&gt;4)-beta-D-GlcNAc-(1-&gt;4)-beta-D-GlcNAc)-L-asparaginyl-[protein] (N-glucan mannose isomer 8A1,2,3B1,3) + 3 H2O = N(4)-(alpha-D-Man-(1-&gt;3)-[alpha-D-Man-(1-&gt;3)-[alpha-D-Man-(1-&gt;6)]-alpha-D-Man-(1-&gt;6)]-beta-D-Man-(1-&gt;4)-beta-D-GlcNAc-(1-&gt;4)-beta-D-GlcNAc)-L-asparaginyl-[protein] (N-glucan mannose isomer 5A1,2) + 3 beta-D-mannose. The protein operates within protein modification; protein glycosylation. With respect to regulation, inhibited by both 1-deoxymannojirimycin and kifunensine. Functionally, involved in the maturation of Asn-linked oligosaccharides. Trim alpha-1,2-linked mannose residues from Man(9)GlcNAc(2) to produce first Man(8)GlcNAc(2) then Man(6)GlcNAc and a small amount of Man(5)GlcNAc. This Homo sapiens (Human) protein is Mannosyl-oligosaccharide 1,2-alpha-mannosidase IC (MAN1C1).